A 306-amino-acid chain; its full sequence is Acetaldehyde dehydrogenase (306 aa).

12–15 provides a ligand contact to NAD(+); the sequence is SGNI. Cys-127 serves as the catalytic Acyl-thioester intermediate. NAD(+)-binding positions include 158–166 and Asn-277; that span reads SAGPGTRAN.

It belongs to the acetaldehyde dehydrogenase family.

It carries out the reaction acetaldehyde + NAD(+) + CoA = acetyl-CoA + NADH + H(+). This is Acetaldehyde dehydrogenase from Mycolicibacterium gilvum (strain PYR-GCK) (Mycobacterium gilvum (strain PYR-GCK)).